A 505-amino-acid polypeptide reads, in one-letter code: Cytochrome P450 52C1 (505 aa).

A helical transmembrane segment spans residues 4-21 (LFCFLAGIIVVYKAAQYY). Position 453 (Cys-453) interacts with heme.

It belongs to the cytochrome P450 family. Requires heme as cofactor.

It is found in the membrane. In terms of biological role, together with an NADPH cytochrome P450 the enzyme system catalyzes the terminal hydroxylation as the first step in the assimilation of alkanes and fatty acids. The protein is Cytochrome P450 52C1 (CYP52C1) of Candida tropicalis (Yeast).